The sequence spans 251 residues: Coproheme decarboxylase (251 aa).

Fe-coproporphyrin III is bound by residues Arg133, 147-151 (YPMSK), His174, Gln187, and Ser225. Tyr147 is an active-site residue.

The protein belongs to the ChdC family. Type 1 subfamily. Fe-coproporphyrin III serves as cofactor.

The catalysed reaction is Fe-coproporphyrin III + 2 H2O2 + 2 H(+) = heme b + 2 CO2 + 4 H2O. It catalyses the reaction Fe-coproporphyrin III + H2O2 + H(+) = harderoheme III + CO2 + 2 H2O. The enzyme catalyses harderoheme III + H2O2 + H(+) = heme b + CO2 + 2 H2O. Its pathway is porphyrin-containing compound metabolism; protoheme biosynthesis. Functionally, involved in coproporphyrin-dependent heme b biosynthesis. Catalyzes the decarboxylation of Fe-coproporphyrin III (coproheme) to heme b (protoheme IX), the last step of the pathway. The reaction occurs in a stepwise manner with a three-propionate intermediate. In Listeria innocua serovar 6a (strain ATCC BAA-680 / CLIP 11262), this protein is Coproheme decarboxylase.